We begin with the raw amino-acid sequence, 289 residues long: MHKHNNGLKTAALFGVLWAVLLGLGAIIAAGTRSTTPIWIMALIGVATTAYGYWNSDKIAIRSMAAYPVTEAQAPQLYQIVRELSVRANKPMPRIYLSPTMTPNAFATGRNPKNAAVCCTEGILHLLDARELRGVLGHELMHVYNRDILTSSVVAAVAGVITSVGQMLLIFGSGDRRNANPLATIAMALLAPFAASLIQMAISRTREFDADEDGAELTGDPLALASALRKIESGVSQLPLPPDQRLVNASHLMIANPFRGGGIRRMFSTHPPMKERISRLERMAGRPLL.

2 helical membrane-spanning segments follow: residues 11–31 (AALF…IAAG) and 34–54 (STTP…YGYW). Zn(2+) is bound at residue His-138. Glu-139 is a catalytic residue. Zn(2+) is bound at residue His-142. Helical transmembrane passes span 152–172 (SVVA…LIFG) and 182–202 (LATI…QMAI). Zn(2+) is bound at residue Glu-207.

It belongs to the peptidase M48B family. Zn(2+) serves as cofactor.

It localises to the cell membrane. This is Protease HtpX homolog from Paenarthrobacter aurescens (strain TC1).